The sequence spans 514 residues: Cholesterol side-chain cleavage enzyme, mitochondrial (514 aa).

A mitochondrion-targeting transit peptide spans 1–39 (SFRLSLSASTYAQRGSFTTPEHDFTLFPHRNHSVTSESR). Cys-461 lines the heme pocket.

Belongs to the cytochrome P450 family. Requires heme as cofactor.

It localises to the mitochondrion inner membrane. The catalysed reaction is 6 reduced [adrenodoxin] + cholesterol + 3 O2 + 6 H(+) = 4-methylpentanal + pregnenolone + 6 oxidized [adrenodoxin] + 4 H2O. It participates in lipid metabolism; C21-steroid hormone metabolism. In terms of biological role, catalyzes the side-chain cleavage reaction of cholesterol to pregnenolone, the precursor of most steroid hormones. The chain is Cholesterol side-chain cleavage enzyme, mitochondrial (CYP11A1) from Hypanus americanus (Southern stingray).